A 317-amino-acid chain; its full sequence is Movement protein (317 aa).

The interval 223 to 317 is disordered; it reads ETGSIRGIAP…RVTDPNPERL (95 aa). Positions 255–276 are enriched in low complexity; sequence SKTTKLPSLEPSSGSSSGLSMS. Residues 302–317 are compositionally biased toward basic and acidic residues; it reads HLSDKGRVTDPNPERL.

Interacts with host glyceraldehyde 3-phosphate dehydrogenase-A/NbGAPDH-A; this interaction plays a positive role in cell-to-cell movement of the virus.

The protein localises to the host cell wall. It is found in the host endoplasmic reticulum membrane. In terms of biological role, plays an essential role in cell-to-cell movement and long-distance transport of the viral genome. Mechanistically, movement protein is recruited by viral replicase complexes formed on RNA1 to punctate structures on the host cortical endoplasmic reticulum. In turn, interacts with the viral genome and mediates virion movement from cell to cell. Also acts as a suppressor of RNA-mediated gene silencing, also known as post-transcriptional gene silencing (PTGS), a mechanism of plant viral defense that limits the accumulation of viral RNAs. The sequence is that of Movement protein from Red clover necrotic mosaic virus (RCNMV).